Reading from the N-terminus, the 559-residue chain is Formate--tetrahydrofolate ligase (559 aa).

Residue 68–75 (TPAGEGKT) participates in ATP binding.

This sequence belongs to the formate--tetrahydrofolate ligase family.

It catalyses the reaction (6S)-5,6,7,8-tetrahydrofolate + formate + ATP = (6R)-10-formyltetrahydrofolate + ADP + phosphate. It functions in the pathway one-carbon metabolism; tetrahydrofolate interconversion. This chain is Formate--tetrahydrofolate ligase, found in Rhizobium rhizogenes (strain K84 / ATCC BAA-868) (Agrobacterium radiobacter).